The following is a 178-amino-acid chain: Large ribosomal subunit protein eL20x (178 aa).

Belongs to the eukaryotic ribosomal protein eL20 family.

The polypeptide is Large ribosomal subunit protein eL20x (RPL18AC) (Arabidopsis thaliana (Mouse-ear cress)).